The following is a 107-amino-acid chain: Putative double-stranded DNA mimic protein ECA2319 (107 aa).

This sequence belongs to the putative dsDNA mimic protein family.

Its function is as follows. May act as a double-stranded DNA (dsDNA) mimic. Probably regulates the activity of a dsDNA-binding protein. The sequence is that of Putative double-stranded DNA mimic protein ECA2319 from Pectobacterium atrosepticum (strain SCRI 1043 / ATCC BAA-672) (Erwinia carotovora subsp. atroseptica).